Reading from the N-terminus, the 302-residue chain is D-alanine--D-alanine ligase (302 aa).

The region spanning 100–295 is the ATP-grasp domain; the sequence is KTVFDHHGIL…FNELIAKLIE (196 aa). 126–180 is an ATP binding site; the sequence is QDLEPPVFIKPNSGGSSLGMTFARTAEELEKGIETVFSLGDSALVEEYTKGIEVT. 3 residues coordinate Mg(2+): D250, E262, and N264.

It belongs to the D-alanine--D-alanine ligase family. Mg(2+) is required as a cofactor. It depends on Mn(2+) as a cofactor.

It is found in the cytoplasm. The enzyme catalyses 2 D-alanine + ATP = D-alanyl-D-alanine + ADP + phosphate + H(+). It participates in cell wall biogenesis; peptidoglycan biosynthesis. Cell wall formation. The chain is D-alanine--D-alanine ligase from Maridesulfovibrio salexigens (strain ATCC 14822 / DSM 2638 / NCIMB 8403 / VKM B-1763) (Desulfovibrio salexigens).